We begin with the raw amino-acid sequence, 398 residues long: UPF0229 protein Ccel_0490 (398 aa).

Disordered stretches follow at residues 1–22 and 68–104; these read MAIF…RRRH and KSKP…NSEG. Composition is skewed to basic and acidic residues over residues 11–22 and 78–95; these read GKDRSAEDRRRH and GNEK…EGKG.

It belongs to the UPF0229 family.

This chain is UPF0229 protein Ccel_0490, found in Ruminiclostridium cellulolyticum (strain ATCC 35319 / DSM 5812 / JCM 6584 / H10) (Clostridium cellulolyticum).